Consider the following 51-residue polypeptide: GECEQCFSDGGDCTTCFNNGTGPCANCLAGYPAGCSNSDCTAFLSQCYGGC.

5 cysteine pairs are disulfide-bonded: Cys-3–Cys-24, Cys-6–Cys-16, Cys-13–Cys-47, Cys-27–Cys-40, and Cys-35–Cys-51.

The protein localises to the secreted. Its function is as follows. Mating ciliate pheromones (or gamones) are diffusible extracellular communication signals that distinguish different intraspecific classes of cells commonly referred to as 'mating types'. They prepare the latter for conjugation by changing their cell surface properties. The protein is Mating pheromone Er-23 (MAT23) of Euplotes raikovi.